Reading from the N-terminus, the 292-residue chain is Oxidative stress-responsive serine-rich protein 1 (292 aa).

Positions 27–175 (SIASLSVGEG…SSDATQVSQA (149 aa)) are disordered. The segment covering 65-83 (STRKSSRGVVRTQRRRRSK) has biased composition (basic residues). 2 positions are modified to phosphothreonine: T143 and T233.

The protein is Oxidative stress-responsive serine-rich protein 1 (OSER1) of Pongo abelii (Sumatran orangutan).